The sequence spans 292 residues: Bifunctional protein FolD (292 aa).

Residues 169-171 (GRG), threonine 196, and valine 237 each bind NADP(+).

It belongs to the tetrahydrofolate dehydrogenase/cyclohydrolase family. In terms of assembly, homodimer.

The catalysed reaction is (6R)-5,10-methylene-5,6,7,8-tetrahydrofolate + NADP(+) = (6R)-5,10-methenyltetrahydrofolate + NADPH. It carries out the reaction (6R)-5,10-methenyltetrahydrofolate + H2O = (6R)-10-formyltetrahydrofolate + H(+). The protein operates within one-carbon metabolism; tetrahydrofolate interconversion. Its function is as follows. Catalyzes the oxidation of 5,10-methylenetetrahydrofolate to 5,10-methenyltetrahydrofolate and then the hydrolysis of 5,10-methenyltetrahydrofolate to 10-formyltetrahydrofolate. This is Bifunctional protein FolD from Bifidobacterium longum (strain NCC 2705).